The chain runs to 326 residues: RNA/RNP complex-1-interacting phosphatase (326 aa).

The interval 1–28 is disordered; that stretch reads MNQWHYGRYSRGRDFTARAPPKKKGKNQ. Residues 59 to 206 enclose the Tyrosine-protein phosphatase domain; the sequence is FEAKLMPEEC…LQKRRVRKNQ (148 aa). The active-site Phosphocysteine intermediate is C150. 151 to 156 serves as a coordination point for substrate; it reads THGLNR. Residue R156 is the Proton donor/acceptor of the active site. A disordered region spans residues 200 to 258; sequence RRVRKNQNASASRSGGLEDSAHLTEQVHTTNKPVNKGPKKSRRGGHLESSQHVQTQSSA. Polar residues predominate over residues 247 to 258; that stretch reads ESSQHVQTQSSA.

Belongs to the protein-tyrosine phosphatase family. Non-receptor class dual specificity subfamily. Monomer. May interact with SFRS7 and SFRS9/SRP30C.

The protein localises to the nucleus. It localises to the nucleus speckle. Functionally, possesses RNA 5'-triphosphatase and diphosphatase activities, but displays a poor protein-tyrosine phosphatase activity. In addition, has phosphatase activity with ATP, ADP and O-methylfluorescein phosphate (in vitro). Binds to RNA. May participate in nuclear mRNA metabolism. This chain is RNA/RNP complex-1-interacting phosphatase (Dusp11), found in Rattus norvegicus (Rat).